Here is a 428-residue protein sequence, read N- to C-terminus: 3-phosphoshikimate 1-carboxyvinyltransferase (428 aa).

3-phosphoshikimate-binding residues include lysine 22, serine 23, and arginine 27. Position 22 (lysine 22) interacts with phosphoenolpyruvate. Phosphoenolpyruvate contacts are provided by glycine 95 and arginine 123. Residues serine 170, serine 171, glutamine 172, serine 197, aspartate 316, and lysine 343 each contribute to the 3-phosphoshikimate site. Glutamine 172 provides a ligand contact to phosphoenolpyruvate. Aspartate 316 functions as the Proton acceptor in the catalytic mechanism. Phosphoenolpyruvate is bound by residues arginine 347, arginine 390, and lysine 414.

This sequence belongs to the EPSP synthase family. In terms of assembly, monomer.

It localises to the cytoplasm. The enzyme catalyses 3-phosphoshikimate + phosphoenolpyruvate = 5-O-(1-carboxyvinyl)-3-phosphoshikimate + phosphate. The protein operates within metabolic intermediate biosynthesis; chorismate biosynthesis; chorismate from D-erythrose 4-phosphate and phosphoenolpyruvate: step 6/7. Its function is as follows. Catalyzes the transfer of the enolpyruvyl moiety of phosphoenolpyruvate (PEP) to the 5-hydroxyl of shikimate-3-phosphate (S3P) to produce enolpyruvyl shikimate-3-phosphate and inorganic phosphate. In Laribacter hongkongensis (strain HLHK9), this protein is 3-phosphoshikimate 1-carboxyvinyltransferase.